An 863-amino-acid polypeptide reads, in one-letter code: Bifunctional uridylyltransferase/uridylyl-removing enzyme (863 aa).

A uridylyltransferase region spans residues 1–328; the sequence is MLFPLSLSSP…SSNQATVIEQ (328 aa). Residues 329–687 are uridylyl-removing; that stretch reads LDDDFQLINQ…ISNRFSLGGT (359 aa). In terms of domain architecture, HD spans 446 to 568; the sequence is VDEHTLRVML…VQNQVRLDYL (123 aa). ACT domains lie at 688–772 and 794–863; these read EVFI…PNRQ and EMEL…RNIG.

This sequence belongs to the GlnD family. Requires Mg(2+) as cofactor.

The enzyme catalyses [protein-PII]-L-tyrosine + UTP = [protein-PII]-uridylyl-L-tyrosine + diphosphate. The catalysed reaction is [protein-PII]-uridylyl-L-tyrosine + H2O = [protein-PII]-L-tyrosine + UMP + H(+). With respect to regulation, uridylyltransferase (UTase) activity is inhibited by glutamine, while glutamine activates uridylyl-removing (UR) activity. In terms of biological role, modifies, by uridylylation and deuridylylation, the PII regulatory proteins (GlnB and homologs), in response to the nitrogen status of the cell that GlnD senses through the glutamine level. Under low glutamine levels, catalyzes the conversion of the PII proteins and UTP to PII-UMP and PPi, while under higher glutamine levels, GlnD hydrolyzes PII-UMP to PII and UMP (deuridylylation). Thus, controls uridylylation state and activity of the PII proteins, and plays an important role in the regulation of nitrogen assimilation and metabolism. This chain is Bifunctional uridylyltransferase/uridylyl-removing enzyme, found in Haemophilus influenzae (strain PittEE).